A 44-amino-acid polypeptide reads, in one-letter code: Photosystem I reaction center subunit IX (44 aa).

A helical transmembrane segment spans residues 7-27; sequence YLSVAPVISTLWFGSLAGLLI.

It belongs to the PsaJ family.

Its subcellular location is the plastid. The protein localises to the chloroplast thylakoid membrane. Its function is as follows. May help in the organization of the PsaE and PsaF subunits. The sequence is that of Photosystem I reaction center subunit IX from Ceratophyllum demersum (Rigid hornwort).